Consider the following 382-residue polypeptide: Kelch domain-containing protein 3 (382 aa).

Kelch repeat units follow at residues 25–77 (RVYS…PYMR), 88–138 (TVFL…VLGK), 139–189 (IMYI…TMLG), 191–249 (HMYV…GYNG), and 251–301 (LYIF…IVGD).

In terms of assembly, component of a CRL2(KLHDC3) complex, also named ECS(KLHDC3) complex, composed of CUL2, Elongin BC (ELOB and ELOC), RBX1 and substrate-specific adapter KLHDC3. May form oligomers as a KLHDC3-ELOB-ELOC complex; this interaction is likely autoinhibitory for the E3 ligase complex. In terms of tissue distribution, expressed specifically in testis, particularly in pachytene spermatocytes.

Its subcellular location is the cytoplasm. The protein operates within protein modification; protein ubiquitination. Substrate-recognition component of a Cul2-RING (CRL2) E3 ubiquitin-protein ligase complex of the DesCEND (destruction via C-end degrons) pathway, which recognizes a C-degron located at the extreme C terminus of target proteins, leading to their ubiquitination and degradation. The C-degron recognized by the DesCEND pathway is usually a motif of less than ten residues and can be present in full-length proteins, truncated proteins or proteolytically cleaved forms. The CRL2(KLHDC3) complex specifically recognizes proteins with a glycine (Gly) at the C-terminus, leading to their ubiquitination and degradation: recognizes the C-terminal -Arg-(Xaa)n-Arg-Gly, -Arg-(Xaa)n-Lys-Gly, and -Arg-(Xaa)n-Gln-Gly degrons. The CRL2(KLHDC3) complex mediates ubiquitination and degradation of truncated SELENOV and SEPHS2 selenoproteins produced by failed UGA/Sec decoding, which end with a glycine. May be involved in meiotic recombination process. The protein is Kelch domain-containing protein 3 of Mus musculus (Mouse).